A 367-amino-acid polypeptide reads, in one-letter code: Probable butyrate kinase (367 aa).

It belongs to the acetokinase family.

It is found in the cytoplasm. The catalysed reaction is butanoate + ATP = butanoyl phosphate + ADP. The chain is Probable butyrate kinase from Bacillus cytotoxicus (strain DSM 22905 / CIP 110041 / 391-98 / NVH 391-98).